The following is a 459-amino-acid chain: Alcohol acyl transferase 2 (459 aa).

Residues H164 and N385 each act as proton acceptor in the active site.

It belongs to the plant acyltransferase family. Highly expressed in the cortex and skin of ripe fruit.

Involved in the biosynthesis of volatile esters which confer ripe apple fruit flavor. Alcohol acyl transferase that can use a wide range of alcohols as substrate to produce esters. This Malus domestica (Apple) protein is Alcohol acyl transferase 2.